Here is a 1667-residue protein sequence, read N- to C-terminus: Androglobin (1667 aa).

Over residues 1–11 (MASKQTKKKEV) the composition is skewed to basic residues. 3 disordered regions span residues 1 to 45 (MASK…KGKF), 347 to 387 (SLTT…KFSL), and 540 to 566 (GSDL…ITKA). Residues 70–411 (KDKTGKSPVF…SLSDCSSAIQ (342 aa)) enclose the Calpain catalytic domain. Residues 353–384 (APEKSDKVPKEKADARDIGKKRSKDGEKEKFK) are compositionally biased toward basic and acidic residues. Over residues 554-566 (THSQTDLSQITKA) the composition is skewed to polar residues. Residues 763 to 890 (HICSMVSFVI…EEVSLVEWLD (128 aa)) enclose the Globin; C-terminal part domain. Heme b contacts are provided by Gln-792 and His-824. The IQ domain maps to 906-935 (EVAAAIKIQAMWRGTYVRLLMKARIPDTKE). The region spanning 936 to 968 (NISVADTLQKVWAVLEMNLEQYAVSLLRLMFKS) is the Globin; N-terminal part domain. Disordered regions lie at residues 1297 to 1355 (INLG…QQED) and 1420 to 1522 (TSDA…RSPT). Residues 1301–1315 (SPDSHTISEGQKSSV) are compositionally biased toward polar residues. Basic and acidic residues-rich tracts occupy residues 1325–1340 (EKSS…KQAP) and 1433–1450 (TKPK…KEPN). Polar residues predominate over residues 1451–1468 (SKNSAGSESKEMTQTGSG). Residues 1487 to 1498 (STSSESGGVSSP) show a composition bias toward low complexity. Residues 1499 to 1511 (GKEEREQSTRKEN) are compositionally biased toward basic and acidic residues. Residues 1512 to 1522 (IQTGPRTRSPT) are compositionally biased toward polar residues. The stretch at 1588–1629 (QEERLKLKDEVLDMYKEMQDSLDEARQKIFDIREEYRNKLLE) forms a coiled coil. A disordered region spans residues 1646–1667 (KLETEKMTPAPDTQKKKKGKKK).

The protein in the central section; belongs to the globin family. In the N-terminal section; belongs to the peptidase C2 family. As to quaternary structure, interacts with septin SEPT10; contributes to in vitro proteolytic cleavage of SEPT10 in a calmodulin-dependent manner. Interacts with CFAP69. Interacts with SPEF2. May interact with calmodulin.

The protein resides in the cell projection. It localises to the cilium. Its subcellular location is the flagellum. Functionally, probable chimeric globin with a bis-histidyl six-coordinate heme-iron atom through which it could bind dioxygen, carbon monoxide and nitric oxide. Required for sperm flagellum formation and maturation of elongating spermatids, thus playing an essential role in male fertility. In Homo sapiens (Human), this protein is Androglobin.